A 467-amino-acid chain; its full sequence is Abscisic acid 8'-hydroxylase 1 (467 aa).

Residues 5-24 (ALFLTLFAGSLFLYFLRCLI) traverse the membrane as a helical segment. Cys411 contacts heme.

Belongs to the cytochrome P450 family. Heme is required as a cofactor. As to expression, mainly expressed in flowers, siliques, roots and stems. Lower expression in rosette leaves and dry seeds. Expressed in vascular tissues of embryo during the seed development.

The protein resides in the membrane. The catalysed reaction is 2-cis-(+)-abscisate + reduced [NADPH--hemoprotein reductase] + O2 = (+)-8'-hydroxyabscisate + oxidized [NADPH--hemoprotein reductase] + H2O + H(+). It participates in plant hormone degradation; abscisic acid degradation. Functionally, involved in the oxidative degradation of abscisic acid. Plays an important role in determining abscisic acid levels in dry seeds and in the control of postgermination growth. The protein is Abscisic acid 8'-hydroxylase 1 (CYP707A1) of Arabidopsis thaliana (Mouse-ear cress).